Reading from the N-terminus, the 268-residue chain is Mediator of RNA polymerase II transcription subunit 18 (268 aa).

The interval 91–112 is disordered; it reads APASPVADQDAHMSGTDEKSSV. The segment covering 99–112 has biased composition (basic and acidic residues); the sequence is QDAHMSGTDEKSSV.

The protein belongs to the Mediator complex subunit 18 family. Component of the Mediator complex.

The protein resides in the nucleus. Functionally, component of the Mediator complex, a coactivator involved in the regulated transcription of nearly all RNA polymerase II-dependent genes. Mediator functions as a bridge to convey information from gene-specific regulatory proteins to the basal RNA polymerase II transcription machinery. Mediator is recruited to promoters by direct interactions with regulatory proteins and serves as a scaffold for the assembly of a functional preinitiation complex with RNA polymerase II and the general transcription factors. The protein is Mediator of RNA polymerase II transcription subunit 18 (srb5) of Aspergillus fumigatus (strain ATCC MYA-4609 / CBS 101355 / FGSC A1100 / Af293) (Neosartorya fumigata).